A 273-amino-acid polypeptide reads, in one-letter code: Tetraspanin-8 (273 aa).

Residues 1-7 (MARCSNN) are Cytoplasmic-facing. A helical transmembrane segment spans residues 8–28 (LVGILNFLVFLLSIPILAGGI). Over 29–45 (WLSQKGSTECERFLDKP) the chain is Extracellular. The chain crosses the membrane as a helical span at residues 46–66 (VIALGVFLMVVAIAGLIGSCC). Topologically, residues 67–75 (RVTWLLWVY) are cytoplasmic. The helical transmembrane segment at 76 to 96 (LFVMFLLILLVFCITVFAFVV) threads the bilayer. Topologically, residues 97-235 (TNKGAGEAIE…NVKSAWKKVA (139 aa)) are extracellular. N-linked (GlcNAc...) asparagine glycosylation is present at Asn-192. Residues 236–256 (IVNIVFLVFLIIVYSVGCCAF) traverse the membrane as a helical segment. Over 257 to 273 (RNNKRDDSYSRTYGYKP) the chain is Cytoplasmic.

This sequence belongs to the tetraspanin (TM4SF) family.

The protein localises to the membrane. May be involved in the regulation of cell differentiation. In Arabidopsis thaliana (Mouse-ear cress), this protein is Tetraspanin-8 (TET8).